Here is a 291-residue protein sequence, read N- to C-terminus: Homoserine kinase (291 aa).

Residue 80 to 90 (RPASGLGSSAA) participates in ATP binding.

Belongs to the GHMP kinase family. Homoserine kinase subfamily.

It localises to the cytoplasm. The enzyme catalyses L-homoserine + ATP = O-phospho-L-homoserine + ADP + H(+). Its pathway is amino-acid biosynthesis; L-threonine biosynthesis; L-threonine from L-aspartate: step 4/5. Its function is as follows. Catalyzes the ATP-dependent phosphorylation of L-homoserine to L-homoserine phosphate. The chain is Homoserine kinase from Natronomonas pharaonis (strain ATCC 35678 / DSM 2160 / CIP 103997 / JCM 8858 / NBRC 14720 / NCIMB 2260 / Gabara) (Halobacterium pharaonis).